The chain runs to 142 residues: Universal stress protein G (142 aa).

Belongs to the universal stress protein A family.

This is Universal stress protein G (uspG) from Salmonella typhi.